The chain runs to 480 residues: Phenylalanine--tRNA ligase alpha subunit (480 aa).

L-phenylalanine contacts are provided by T324 and F407. A Mg(2+)-binding site is contributed by E409. F432 contributes to the L-phenylalanine binding site.

It belongs to the class-II aminoacyl-tRNA synthetase family. Phe-tRNA synthetase alpha subunit type 2 subfamily. As to quaternary structure, tetramer of two alpha and two beta subunits. Requires Mg(2+) as cofactor.

It is found in the cytoplasm. It catalyses the reaction tRNA(Phe) + L-phenylalanine + ATP = L-phenylalanyl-tRNA(Phe) + AMP + diphosphate + H(+). In Methanocaldococcus jannaschii (strain ATCC 43067 / DSM 2661 / JAL-1 / JCM 10045 / NBRC 100440) (Methanococcus jannaschii), this protein is Phenylalanine--tRNA ligase alpha subunit.